The primary structure comprises 539 residues: Cytochrome P450 monooxygenase pvhE (539 aa).

The chain crosses the membrane as a helical span at residues 15–31 (VAFCSLVILCILFKVLT). The N-linked (GlcNAc...) asparagine glycan is linked to N379. Residue C473 coordinates heme.

This sequence belongs to the cytochrome P450 family. Heme is required as a cofactor.

It is found in the membrane. Its pathway is secondary metabolite biosynthesis. Functionally, cytochrome P450 monooxygenase; part of the gene cluster that mediates the biosynthesis of varicidin A, an antifungal natural product containing a cis-octahydrodecalin core. The PKS module of pvhA together with the enoylreductase pvhC catalyze the formation of the polyketide unit which is then conjugated to L-isoleucine by the condensation domain of the NRPS module. Activity of the Dieckmann cyclase domain (RED) of pvhA results in release of an acyclic tetramate. The cytochrome P450 monooxygenase pvhE then catalyzes the oxidation of the C21 methyl group to a to carboxylate group. The methyltransferase pvhD then further methylates the pvhE product. The Diels-Alderase pvhB is able to catalyze Diels-Alder cycloaddition using both pvhE and pvhD products as substrates to form the decalin ring, yielding varicidin B and A, respectively. This Talaromyces variabilis (Penicillium variabile) protein is Cytochrome P450 monooxygenase pvhE.